The chain runs to 230 residues: MDNKIIVALDYETEYEALSFVDQVDPSLCRVKVGKEMFTTLGTNFVKQLHERKFDVFLDLKYHDIPNTVARAVRSAADLGVWMVDLHASGGLTMMEEAKKILEPYGKDAPLLIAVTVLTSMEDLDLLQIGINASPMEQVIRLAHLAQRAGLDGVVCSPQEVEVLRTHCGKDFKLVTPGIRPEGSDVGDQRRIMTPKQAIETGSDYLVIGRPITQAQDPLSVLKSINASIR.

Substrate-binding positions include aspartate 10, lysine 32, 59–68, threonine 119, arginine 180, glutamine 189, glycine 209, and arginine 210; that span reads DLKYHDIPNT. The active-site Proton donor is the lysine 61.

It belongs to the OMP decarboxylase family. Type 1 subfamily. Homodimer.

It catalyses the reaction orotidine 5'-phosphate + H(+) = UMP + CO2. It participates in pyrimidine metabolism; UMP biosynthesis via de novo pathway; UMP from orotate: step 2/2. Its function is as follows. Catalyzes the decarboxylation of orotidine 5'-monophosphate (OMP) to uridine 5'-monophosphate (UMP). This Actinobacillus pleuropneumoniae serotype 5b (strain L20) protein is Orotidine 5'-phosphate decarboxylase.